The primary structure comprises 474 residues: Glycogen synthase (474 aa).

Residue K15 coordinates ADP-alpha-D-glucose.

It belongs to the glycosyltransferase 1 family. Bacterial/plant glycogen synthase subfamily.

The enzyme catalyses [(1-&gt;4)-alpha-D-glucosyl](n) + ADP-alpha-D-glucose = [(1-&gt;4)-alpha-D-glucosyl](n+1) + ADP + H(+). It participates in glycan biosynthesis; glycogen biosynthesis. Its function is as follows. Synthesizes alpha-1,4-glucan chains using ADP-glucose. The polypeptide is Glycogen synthase (Finegoldia magna (strain ATCC 29328 / DSM 20472 / WAL 2508) (Peptostreptococcus magnus)).